The chain runs to 487 residues: MTELFIDGAWVAGSGPVFASRNPGTDEIAWQGESASAADVDRAVASARRAFAGWSALDFEARCAIVKRFAALLTERKEAIATAIGRETGKPLWEARTEVASMAAKVGISIQAYQERTGEKRQDMADGVAVLRHRPHGVVAVFGPYNFPGHLPNGHIVPALIAGNTVVFKPSELAPGVARATVEVWQEAGLPAGVLNLVQGEKDTGIALANHRQIDGLFFTGSSDTGTLLHKQFGGRPEIVLALEMGGNNPLVIGEVEDIDAAVHHTIQSAFLSAGQRCTCARRIFVPQGAFGDRFLARFVDVTSKITADVFDADPQPFMGAVISARAAAKLVDAQSRLIEQGAKPIIAMTQRDPRLGFVNAAIVDVTGVANLPDEEHFGPLAQIVRYATFDDAIERANDTAFGLSAGLLADDENAWAHFRRTIRAGIVNWNRPTNGASSAAPFGGTGRSGNHRPSAYYAADYCAYPMASVESTQLTLPASLSPGLHF.

NAD(+) is bound at residue 221 to 226 (GSSDTG). Catalysis depends on residues Glu-244 and Cys-278.

It belongs to the aldehyde dehydrogenase family. AstD subfamily.

It carries out the reaction N-succinyl-L-glutamate 5-semialdehyde + NAD(+) + H2O = N-succinyl-L-glutamate + NADH + 2 H(+). It functions in the pathway amino-acid degradation; L-arginine degradation via AST pathway; L-glutamate and succinate from L-arginine: step 4/5. Its function is as follows. Catalyzes the NAD-dependent reduction of succinylglutamate semialdehyde into succinylglutamate. In Burkholderia orbicola (strain MC0-3), this protein is N-succinylglutamate 5-semialdehyde dehydrogenase.